Reading from the N-terminus, the 216-residue chain is Cytochrome c biogenesis ATP-binding export protein CcmA (216 aa).

The 206-residue stretch at 11-216 (VSASKLTCIR…RKIRLDYRFV (206 aa)) folds into the ABC transporter domain. Position 43 to 50 (43 to 50 (GPNGAGKT)) interacts with ATP.

It belongs to the ABC transporter superfamily. CcmA exporter (TC 3.A.1.107) family. The complex is composed of two ATP-binding proteins (CcmA) and two transmembrane proteins (CcmB).

The protein localises to the cell inner membrane. The enzyme catalyses heme b(in) + ATP + H2O = heme b(out) + ADP + phosphate + H(+). Its function is as follows. Part of the ABC transporter complex CcmAB involved in the biogenesis of c-type cytochromes; once thought to export heme, this seems not to be the case, but its exact role is uncertain. Responsible for energy coupling to the transport system. The protein is Cytochrome c biogenesis ATP-binding export protein CcmA of Shewanella sp. (strain MR-4).